The primary structure comprises 584 residues: DNA mismatch repair protein MutL (584 aa).

The protein belongs to the DNA mismatch repair MutL/HexB family.

In terms of biological role, this protein is involved in the repair of mismatches in DNA. It is required for dam-dependent methyl-directed DNA mismatch repair. May act as a 'molecular matchmaker', a protein that promotes the formation of a stable complex between two or more DNA-binding proteins in an ATP-dependent manner without itself being part of a final effector complex. This chain is DNA mismatch repair protein MutL, found in Buchnera aphidicola subsp. Acyrthosiphon pisum (strain 5A).